The primary structure comprises 608 residues: Dolichyl-diphosphooligosaccharide--protein glycosyltransferase subunit 1 (608 aa).

The N-terminal stretch at 1-24 is a signal peptide; that stretch reads MEAPAVCLLPLLLLLWAWAPAPGR. Residues 25–435 are Lumenal-facing; it reads ASPEALPLVN…VVHYTFNKVL (411 aa). The residue at position 188 (lysine 188) is an N6-acetyllysine. An N-linked (GlcNAc...) asparagine glycan is attached at asparagine 300. Residues 436–456 form a helical membrane-spanning segment; it reads MLQEPLLVVAAFYILFFTVIV. The Cytoplasmic portion of the chain corresponds to 457–607; sequence YVRLDFSITK…VTKIDHILDA (151 aa). Lysine 539 bears the N6-acetyllysine; alternate mark. Lysine 539 is covalently cross-linked (Glycyl lysine isopeptide (Lys-Gly) (interchain with G-Cter in SUMO2); alternate).

The protein belongs to the OST1 family. Component of the oligosaccharyltransferase (OST) complex. OST exists in two different complex forms which contain common core subunits RPN1, RPN2, OST48, OST4, DAD1 and TMEM258, either STT3A or STT3B as catalytic subunits, and form-specific accessory subunits. STT3A complex assembly occurs through the formation of 3 subcomplexes. Subcomplex 1 contains RPN1 and TMEM258, subcomplex 2 contains the STT3A-specific subunits STT3A, DC2/OSTC, and KCP2 as well as the core subunit OST4, and subcomplex 3 contains RPN2, DAD1, and OST48. The STT3A complex can form stable complexes with the Sec61 complex or with both the Sec61 and TRAP complexes. Interacts with TMEM35A/NACHO. In terms of processing, ubiquitinated by the ECS(ASB11) complex. Post-translationally, ufmylated by UFL1 in response to endoplasmic reticulum stress, promoting reticulophagy of endoplasmic reticulum sheets. As to expression, detected in liver (at protein level).

The protein resides in the endoplasmic reticulum membrane. The protein operates within protein modification; protein glycosylation. In terms of biological role, subunit of the oligosaccharyl transferase (OST) complex that catalyzes the initial transfer of a defined glycan (Glc(3)Man(9)GlcNAc(2) in eukaryotes) from the lipid carrier dolichol-pyrophosphate to an asparagine residue within an Asn-X-Ser/Thr consensus motif in nascent polypeptide chains, the first step in protein N-glycosylation. N-glycosylation occurs cotranslationally and the complex associates with the Sec61 complex at the channel-forming translocon complex that mediates protein translocation across the endoplasmic reticulum (ER). All subunits are required for a maximal enzyme activity. The polypeptide is Dolichyl-diphosphooligosaccharide--protein glycosyltransferase subunit 1 (Sus scrofa (Pig)).